The primary structure comprises 122 residues: Large ribosomal subunit protein uL14 (122 aa).

It belongs to the universal ribosomal protein uL14 family. In terms of assembly, part of the 50S ribosomal subunit. Forms a cluster with proteins L3 and L19. In the 70S ribosome, L14 and L19 interact and together make contacts with the 16S rRNA in bridges B5 and B8.

Its function is as follows. Binds to 23S rRNA. Forms part of two intersubunit bridges in the 70S ribosome. The chain is Large ribosomal subunit protein uL14 from Pseudoalteromonas translucida (strain TAC 125).